We begin with the raw amino-acid sequence, 165 residues long: Protein SprT (165 aa).

Positions Glu-20–Val-163 constitute a SprT-like domain. His-78 is a binding site for Zn(2+). Glu-79 is an active-site residue. A Zn(2+)-binding site is contributed by His-82.

It belongs to the SprT family. The cofactor is Zn(2+).

Its subcellular location is the cytoplasm. This is Protein SprT from Salmonella arizonae (strain ATCC BAA-731 / CDC346-86 / RSK2980).